A 237-amino-acid polypeptide reads, in one-letter code: 2-C-methyl-D-erythritol 4-phosphate cytidylyltransferase (237 aa).

This sequence belongs to the IspD/TarI cytidylyltransferase family. IspD subfamily.

It carries out the reaction 2-C-methyl-D-erythritol 4-phosphate + CTP + H(+) = 4-CDP-2-C-methyl-D-erythritol + diphosphate. It functions in the pathway isoprenoid biosynthesis; isopentenyl diphosphate biosynthesis via DXP pathway; isopentenyl diphosphate from 1-deoxy-D-xylulose 5-phosphate: step 2/6. In terms of biological role, catalyzes the formation of 4-diphosphocytidyl-2-C-methyl-D-erythritol from CTP and 2-C-methyl-D-erythritol 4-phosphate (MEP). This is 2-C-methyl-D-erythritol 4-phosphate cytidylyltransferase from Acaryochloris marina (strain MBIC 11017).